Here is an 893-residue protein sequence, read N- to C-terminus: Probable disease resistance protein At1g62630 (893 aa).

The stretch at 24–68 forms a coiled coil; sequence GSYTHNLEKNLVALETTMEELKAKRDDLLRRLKREEDRGLQRLSE. An NB-ARC domain is found at 136 to 440; the sequence is TEQASTSAFE…CEEIIDGSEG (305 aa). 179 to 186 lines the ATP pocket; that stretch reads GMGGVGKT. 6 LRR repeats span residues 516–537, 538–559, 571–593, 595–617, 618–640, and 641–663; these read VVRR…YECM, ELTT…SEIK, KLAV…ISNL, SLKY…QELK, KIIH…SSLH, and NLKV…KELE.

This sequence belongs to the disease resistance NB-LRR family.

Functionally, probable disease resistance protein. The chain is Probable disease resistance protein At1g62630 from Arabidopsis thaliana (Mouse-ear cress).